The primary structure comprises 124 residues: UPF0231 protein Sama_0645 (124 aa).

The protein belongs to the UPF0231 family.

This is UPF0231 protein Sama_0645 from Shewanella amazonensis (strain ATCC BAA-1098 / SB2B).